The primary structure comprises 80 residues: Serine palmitoyltransferase small subunit A-A (80 aa).

Over 1-21 (MKVLCEDVNGPRSSLGRAWSH) the chain is Cytoplasmic. The helical transmembrane segment at 22–38 (MSWLYYQYLLVTALYML) threads the bilayer. The Lumenal portion of the chain corresponds to 39 to 43 (EPWER). A helical membrane pass occupies residues 44–66 (TVFNSMLVSIVGMALYTGYIFMP). Over 67-80 (QHILAILHYFEIVQ) the chain is Cytoplasmic.

The protein belongs to the SPTSS family. SPTSSA subfamily. In terms of assembly, component of the serine palmitoyltransferase (SPT) complex, which is composed of SPTLC1, SPTLC2 or SPTLC3 and SPTSSA or SPTSSB. The heterodimer consisting of SPTLC1 and SPTLC2/SPTLC3 forms the catalytic core of the enzyme, while SPTSSA or SPTSSB subunits determine substrate specificity. SPT also interacts with ORMDL proteins, especially ORMDL3, which negatively regulate SPT activity in the presence of ceramides.

Its subcellular location is the endoplasmic reticulum membrane. It participates in lipid metabolism; sphingolipid metabolism. Component of the serine palmitoyltransferase multisubunit enzyme (SPT) that catalyzes the initial and rate-limiting step in sphingolipid biosynthesis by condensing L-serine and activated acyl-CoA (most commonly palmitoyl-CoA) to form long-chain bases. The SPT complex is composed of SPTLC1, SPTLC2 or SPTLC3 and SPTSSA or SPTSSB. Within this complex, the heterodimer consisting of SPTLC1 and SPTLC2/SPTLC3 forms the catalytic core. Within the SPT complex, SPTSSA stimulates the catalytic activity and plays a role in substrate specificity, which depends upon the overall complex composition. The SPTLC1-SPTLC2-SPTSSA complex shows a strong preference for C16-CoA substrate, while the SPTLC1-SPTLC3-SPTSSA isozyme uses both C14-CoA and C16-CoA as substrates, with a slight preference for C14-CoA. Independently of its action as a SPT component, may be involved in MBOAT7 localization to mitochondria-associated membranes, a membrane bridge between the endoplasmic reticulum and mitochondria, may hence affect MBOAT7-catalyzed incorporation of arachidonic acid into phosphatidylinositol. The protein is Serine palmitoyltransferase small subunit A-A (sptssa-a) of Xenopus laevis (African clawed frog).